The sequence spans 347 residues: Core-capsid bridging protein (347 aa).

A disordered region spans residues 290–320 (GYRGTTFQRRATAPSRRRGPSRRRRRRKATL). The span at 304 to 318 (SRRRGPSRRRRRRKA) shows a compositional bias: basic residues.

It belongs to the adenoviridae core-capsid bridging protein family. Monomer. Homodimer. Exists in equilibrium between monomers and dimers in solution. Interacts with the histone-like nucleoprotein; this interactions bridge the virus core to the capsid. Interacts with core protein X; this interactions bridge the virus core to the capsid. Interacts with the endosome lysis protein VI; this interactions bridge the virus core to the capsid. Interacts with the peripentonal hexons. Interacts with host NPM1; this interaction might play a role in virus assembly.

Its subcellular location is the virion. The protein localises to the host nucleus. It is found in the host nucleolus. Associates loosely with the viral DNA to form an outer shell around the nucleoprotein-DNA complex and links it with the capsid by binding the endosome lysis protein. Dissociates from the viral genome during entry. Might be involved in nuclear capsid assembly of the viral particles through its association with NPM1/nucleophosmin. The protein is Core-capsid bridging protein of Homo sapiens (Human).